Here is a 245-residue protein sequence, read N- to C-terminus: 2,3-bisphosphoglycerate-dependent phosphoglycerate mutase (245 aa).

Substrate-binding positions include 8-15 (RHGQSLWN), 21-22 (TG), R60, 87-90 (ERHY), K98, 114-115 (RR), and 183-184 (GN). H9 (tele-phosphohistidine intermediate) is an active-site residue. E87 functions as the Proton donor/acceptor in the catalytic mechanism.

Belongs to the phosphoglycerate mutase family. BPG-dependent PGAM subfamily.

It carries out the reaction (2R)-2-phosphoglycerate = (2R)-3-phosphoglycerate. It participates in carbohydrate degradation; glycolysis; pyruvate from D-glyceraldehyde 3-phosphate: step 3/5. Catalyzes the interconversion of 2-phosphoglycerate and 3-phosphoglycerate. This is 2,3-bisphosphoglycerate-dependent phosphoglycerate mutase from Bacillus cytotoxicus (strain DSM 22905 / CIP 110041 / 391-98 / NVH 391-98).